The primary structure comprises 425 residues: Glutamate-1-semialdehyde 2,1-aminomutase (425 aa).

Lys-265 carries the post-translational modification N6-(pyridoxal phosphate)lysine.

This sequence belongs to the class-III pyridoxal-phosphate-dependent aminotransferase family. HemL subfamily. In terms of assembly, homodimer. The cofactor is pyridoxal 5'-phosphate.

Its subcellular location is the cytoplasm. The catalysed reaction is (S)-4-amino-5-oxopentanoate = 5-aminolevulinate. It functions in the pathway porphyrin-containing compound metabolism; protoporphyrin-IX biosynthesis; 5-aminolevulinate from L-glutamyl-tRNA(Glu): step 2/2. The sequence is that of Glutamate-1-semialdehyde 2,1-aminomutase from Clostridium perfringens (strain ATCC 13124 / DSM 756 / JCM 1290 / NCIMB 6125 / NCTC 8237 / Type A).